A 324-amino-acid polypeptide reads, in one-letter code: MGYCQDDQLVNKICDLYEKISKLETLKPCEDVDTLFKQLVSTCIPPNPNIDVTKMSENIQEMRSNLIKICGEAEGYLEHHFSSILTSFEDNPLHHLNLFPYYNNYLKLSKLEFDLLEQNLNGFVPRTVAFIGSGPLPLTSVVLASSHLKDSIFHNFDIDPSANMVAARLVSSDPDLSQRMFFHTVDIMDVTESLKGFDVVFLAALVGMDKKEKVKVVEHLEKHMSPGALLMLRSAHGPRAFLYPIVEPCDLEGFEVLSVYHPTDEVINSIVISRKLGEDANGVVHDHIDQASDLACNCSKIHVIMNKKKSIIEEFAGANEEQLT.

Belongs to the nicotianamine synthase (NAS)-like family.

It catalyses the reaction 3 S-adenosyl-L-methionine = nicotianamine + 3 S-methyl-5'-thioadenosine + 3 H(+). In terms of biological role, synthesizes nicotianamine, a polyamine which serves as a sensor for the physiological iron status within the plant, and/or might be involved in the transport of iron. In Arabidopsis thaliana (Mouse-ear cress), this protein is Probable nicotianamine synthase 4 (NAS4).